The chain runs to 384 residues: Substance-K receptor (384 aa).

The Extracellular segment spans residues 1-32; the sequence is MGAHASVTDTNILSGLESNATGVTAFSMPGWQ. Asn19 carries an N-linked (GlcNAc...) asparagine glycan. The chain crosses the membrane as a helical span at residues 33 to 56; the sequence is LALWATAYLALVLVAVTGNATVIW. The Cytoplasmic portion of the chain corresponds to 57 to 69; sequence IILAHERMRTVTN. Residues 70 to 90 form a helical membrane-spanning segment; the sequence is YFIINLALADLCMAAFNATFN. Topologically, residues 91–107 are extracellular; it reads FIYASHNIWYFGSTFCY. Cys106 and Cys181 are joined by a disulfide. Residues 108–129 form a helical membrane-spanning segment; it reads FQNLFPVTAMFVSIYSMTAIAA. Residues 130 to 149 lie on the Cytoplasmic side of the membrane; sequence DRYMAIVHPFQPRLSAPSTK. The helical transmembrane segment at 150 to 170 threads the bilayer; it reads AVIAVIWLVALALASPQCFYS. The Extracellular portion of the chain corresponds to 171–196; the sequence is TITVDQGATKCVVAWPNDNGGKMLLL. Residues 197-218 traverse the membrane as a helical segment; sequence YHLVVFVLIYFLPLVVMFAAYS. At 219–251 the chain is on the cytoplasmic side; it reads VIGLTLWKRAVPRHQAHGANLRHLQAKKKFVKA. A helical transmembrane segment spans residues 252-272; it reads MVLVVVTFAICWLPYHLYFIL. The Extracellular segment spans residues 273–290; that stretch reads GTFQEDIYYRKFIQQVYL. A helical membrane pass occupies residues 291-310; sequence ALFWLAMSSTMYNPIIYCCL. Residues 311 to 384 lie on the Cytoplasmic side of the membrane; the sequence is NHRFRSGFRL…GPQDGEPAGP (74 aa). Cys324 carries the S-palmitoyl cysteine lipid modification. Positions 365 to 384 are disordered; the sequence is HSEATNGQVGGPQDGEPAGP.

It belongs to the G-protein coupled receptor 1 family.

It localises to the cell membrane. In terms of biological role, this is a receptor for the tachykinin neuropeptide substance K (neurokinin A). It is associated with G proteins that activate a phosphatidylinositol-calcium second messenger system. The rank order of affinity of this receptor to tachykinins is: substance K &gt; neuromedin-K &gt; substance P. The polypeptide is Substance-K receptor (Tacr2) (Mus musculus (Mouse)).